The primary structure comprises 64 residues: Alpha-conotoxin Lt14.1 (64 aa).

The first 20 residues, 1–20 (MKLSVMFIVFLMLTMPMTCA), serve as a signal peptide directing secretion. A propeptide spanning residues 21–50 (GISRSATNGGEADVRAHDKAANLMALLQER) is cleaved from the precursor. 2 disulfide bridges follow: C52–C60 and C56–C63. A Cysteine amide modification is found at C63.

This sequence belongs to the conotoxin L superfamily. In terms of processing, may contain a 4-hydroxyproline. Expressed by the venom duct.

The protein localises to the secreted. Functionally, alpha-conotoxins act on postsynaptic membranes, they bind to the nicotinic acetylcholine receptors (nAChR) and thus inhibit them. This synthetic peptide displays analgesic activity in a hot plate assay. Analgesia is also observed against second phase pain in formalin-induced inflammatory pain model, and in a rat model of mechanically-induced pain. Effects downstream of nAChR are inhibition of calcium influx, inhibition of ERK1/2 phosphorylation and inhibition of c-fos/NOS expression. Genes associated with drug dependence are not up-regulated by this toxin. Treatment with this toxin reversed morphine withdrawal symptoms in mice. This Conus litteratus (Lettered cone) protein is Alpha-conotoxin Lt14.1.